A 77-amino-acid chain; its full sequence is Apelin (77 aa).

Residues 1-22 form the signal peptide; sequence MNLRLCVQALLLLWLSLTAVCG. Positions 23 to 41 are excised as a propeptide; sequence VPLMLPPDGTGLEEGSMRY. Positions 46-77 are disordered; sequence RTSRTGPGAWQGGRRKFRRQRPRLSHKGPMPF. The segment covering 58-71 has biased composition (basic residues); that stretch reads GRRKFRRQRPRLSH.

It belongs to the apelin family. Several active peptides may be produced by proteolytic processing of the peptide precursor. Expressed in extraembryonic visceral endoderm and in the primitive streak at 6.5 and 7.5 dpc. Expressed in the anterior visceral yolk sac at 8.25 dpc. Expressed weakly in the embryonic heart at 11.5 dpc. Expressed in the adult heart. Expressed in endothelial cells and cardiomyocytes and weakly expressed in fibroblasts.

The protein localises to the secreted. Its subcellular location is the extracellular space. Functionally, peptide hormone that functions as endogenous ligand for the G-protein-coupled apelin receptor (APLNR/APJ). Functions as a balanced agonist activating both G(i) protein pathway and beta-arrestin pathway of APLNR. Downstream G proteins activation, apelin can inhibit cAMP production and activate key intracellular effectors such as ERKs. On the other hand, APLNR activation induces beta-arrestin recruitment to the membrane leading to desensitization and internalization of the receptor. Apelin also blunts mechanical stretch-induced hypertrophic induction from APLNR. Apelin-36 dissociates more hardly than (pyroglu)apelin-13 from APLNR. Involved in the regulation of cardiac precursor cell movements during gastrulation and heart morphogenesis. Has an inhibitory effect on cytokine production in response to T-cell receptor/CD3 cross-linking; the oral intake of apelin in the colostrum and the milk might therefore modulate immune responses in neonates. Plays a role in early coronary blood vessels formation. Mediates myocardial contractility in an ERK1/2-dependent manner. May also have a role in the central control of body fluid homeostasis by influencing vasopressin release and drinking behavior. The protein is Apelin of Mus musculus (Mouse).